Reading from the N-terminus, the 107-residue chain is Thioredoxin 1 (107 aa).

Residues 2 to 107 (SVAAAVTDAT…TLANTLDKHL (106 aa)) form the Thioredoxin domain. A disulfide bridge links Cys32 with Cys35.

This sequence belongs to the thioredoxin family.

Participates in various redox reactions through the reversible oxidation of its active center dithiol to a disulfide and catalyzes dithiol-disulfide exchange reactions. The sequence is that of Thioredoxin 1 (trxA) from Synechococcus elongatus (strain ATCC 33912 / PCC 7942 / FACHB-805) (Anacystis nidulans R2).